The chain runs to 207 residues: High frequency lysogenization protein HflD homolog (207 aa).

Belongs to the HflD family.

It localises to the cytoplasm. The protein localises to the cell inner membrane. The polypeptide is High frequency lysogenization protein HflD homolog (Pseudomonas fluorescens (strain SBW25)).